A 100-amino-acid polypeptide reads, in one-letter code: ATP synthase subunit c (100 aa).

Transmembrane regions (helical) follow at residues 27–47 (SVIA…IGMG) and 72–92 (FIAL…TLIV).

Belongs to the ATPase C chain family. In terms of assembly, F-type ATPases have 2 components, F(1) - the catalytic core - and F(0) - the membrane proton channel. F(1) has five subunits: alpha(3), beta(3), gamma(1), delta(1), epsilon(1). F(0) has three main subunits: a(1), b(2) and c(10-14). The alpha and beta chains form an alternating ring which encloses part of the gamma chain. F(1) is attached to F(0) by a central stalk formed by the gamma and epsilon chains, while a peripheral stalk is formed by the delta and b chains.

The protein localises to the cell inner membrane. Its function is as follows. F(1)F(0) ATP synthase produces ATP from ADP in the presence of a proton or sodium gradient. F-type ATPases consist of two structural domains, F(1) containing the extramembraneous catalytic core and F(0) containing the membrane proton channel, linked together by a central stalk and a peripheral stalk. During catalysis, ATP synthesis in the catalytic domain of F(1) is coupled via a rotary mechanism of the central stalk subunits to proton translocation. Key component of the F(0) channel; it plays a direct role in translocation across the membrane. A homomeric c-ring of between 10-14 subunits forms the central stalk rotor element with the F(1) delta and epsilon subunits. The chain is ATP synthase subunit c from Campylobacter concisus (strain 13826).